Consider the following 532-residue polypeptide: Muscarinic acetylcholine receptor M5 (532 aa).

Over 1-29 (MEGDSYHNATTVNGTPVYHQPLERHRLWE) the chain is Extracellular. Asn8 is a glycosylation site (N-linked (GlcNAc...) asparagine). Residues 30–53 (VISIAAVTAVVSLITIVGNVLVMI) form a helical membrane-spanning segment. Residues 54 to 66 (SFKVNSQLKTVNN) lie on the Cytoplasmic side of the membrane. Residues 67–87 (YYLLSLACADLIIGIFSMNLY) form a helical membrane-spanning segment. The Extracellular portion of the chain corresponds to 88 to 104 (TTYILMGRWALGSLACD). A disulfide bridge links Cys103 with Cys183. Residues 105–126 (LWLALDYVASNASVMNLLVISF) traverse the membrane as a helical segment. Over 127-146 (DRYFSITRPLTYRAKRTPKR) the chain is Cytoplasmic. A helical membrane pass occupies residues 147–169 (AGVMIGLAWLISFILWAPAILCW). Topologically, residues 170 to 191 (QYLVGKRTVPLDECQIQFLSEP) are extracellular. Residues 192 to 214 (TITFGTAIAAFYIPVSVMTILYC) traverse the membrane as a helical segment. The Cytoplasmic portion of the chain corresponds to 215 to 443 (RIYRETEKRT…LVKERKAAQT (229 aa)). The disordered stretch occupies residues 262–365 (AQRERNQTSW…SDTPNYFLSP (104 aa)). Positions 269–281 (TSWSSSRRSASTS) are enriched in low complexity. Over residues 282 to 308 (GKPSQATDPSTNQAKAEQLTTCSSYPS) the composition is skewed to polar residues. Residues 444–464 (LSAILLAFIITWTPYNIMVLV) traverse the membrane as a helical segment. Topologically, residues 465–478 (STFCDKCVPVTLWH) are extracellular. A helical transmembrane segment spans residues 479–498 (LGYWLCYVNSTVNPICYALC). The Cytoplasmic segment spans residues 499–532 (NRTFRKTFKMLLLCRWKKKKVEEKLYWQGNSKLP). Thr501 and Thr505 each carry phosphothreonine.

It belongs to the G-protein coupled receptor 1 family. Muscarinic acetylcholine receptor subfamily. CHRM5 sub-subfamily.

It localises to the cell membrane. The protein localises to the postsynaptic cell membrane. Functionally, the muscarinic acetylcholine receptor mediates various cellular responses, including inhibition of adenylate cyclase, breakdown of phosphoinositides and modulation of potassium channels through the action of G proteins. Primary transducing effect is Pi turnover. In Macaca mulatta (Rhesus macaque), this protein is Muscarinic acetylcholine receptor M5 (CHRM5).